The primary structure comprises 200 residues: Small ribosomal subunit protein uS4 (200 aa).

The disordered stretch occupies residues 22-43 (TGKELERRPYAPGQHGPTQRKK). In terms of domain architecture, S4 RNA-binding spans 92 to 170 (QRLDNIVYRL…VPEYVTFDAE (79 aa)).

Belongs to the universal ribosomal protein uS4 family. Part of the 30S ribosomal subunit. Contacts protein S5. The interaction surface between S4 and S5 is involved in control of translational fidelity.

One of the primary rRNA binding proteins, it binds directly to 16S rRNA where it nucleates assembly of the body of the 30S subunit. Its function is as follows. With S5 and S12 plays an important role in translational accuracy. The chain is Small ribosomal subunit protein uS4 from Listeria monocytogenes serotype 4b (strain F2365).